A 776-amino-acid chain; its full sequence is Lon protease (776 aa).

A Lon N-terminal domain is found at 12-209 (LPIIALRGLW…LVYKFVIKEI (198 aa)). Residue 360-367 (GPPGVGKT) coordinates ATP. The 181-residue stretch at 596–776 (EDTVGVVNGL…VKEILDEVLI (181 aa)) folds into the Lon proteolytic domain. Catalysis depends on residues Ser683 and Lys726.

It belongs to the peptidase S16 family. In terms of assembly, homohexamer. Organized in a ring with a central cavity.

The protein resides in the cytoplasm. It carries out the reaction Hydrolysis of proteins in presence of ATP.. Its function is as follows. ATP-dependent serine protease that mediates the selective degradation of mutant and abnormal proteins as well as certain short-lived regulatory proteins. Required for cellular homeostasis and for survival from DNA damage and developmental changes induced by stress. Degrades polypeptides processively to yield small peptide fragments that are 5 to 10 amino acids long. Binds to DNA in a double-stranded, site-specific manner. The chain is Lon protease from Finegoldia magna (strain ATCC 29328 / DSM 20472 / WAL 2508) (Peptostreptococcus magnus).